The sequence spans 155 residues: DNA-binding protein inhibitor ID-1 (155 aa).

The region spanning 53-105 (LPALLDEQQVNVLLYDMNGCYSRLKELVPTLPQNRKVSKVEILQHVIDYIRDL) is the bHLH domain. A Nuclear export signal motif is present at residues 98–111 (VIDYIRDLQLELNS).

As to quaternary structure, heterodimer with other HLH proteins. Interacts with COPS5, IFI204, GATA4 and NKX2-5. Interacts with CLOCK and BMAL1.

The protein resides in the cytoplasm. Its subcellular location is the nucleus. Transcriptional regulator (lacking a basic DNA binding domain) which negatively regulates the basic helix-loop-helix (bHLH) transcription factors by forming heterodimers and inhibiting their DNA binding and transcriptional activity. Implicated in regulating a variety of cellular processes, including cellular growth, senescence, differentiation, apoptosis, angiogenesis, and neoplastic transformation. Inhibits skeletal muscle and cardiac myocyte differentiation. Regulates the circadian clock by repressing the transcriptional activator activity of the CLOCK-BMAL1 heterodimer. The protein is DNA-binding protein inhibitor ID-1 (ID1) of Homo sapiens (Human).